Consider the following 213-residue polypeptide: StAR-related lipid transfer protein 5 (213 aa).

Positions 1–213 (MDLATAAQVS…LEKAVKKFFG (213 aa)) constitute an START domain.

In terms of biological role, may be involved in the intracellular transport of sterols or other lipids. May bind cholesterol or other sterols. The polypeptide is StAR-related lipid transfer protein 5 (STARD5) (Bos taurus (Bovine)).